A 340-amino-acid chain; its full sequence is Phosphoribosylformylglycinamidine cyclo-ligase (340 aa).

This sequence belongs to the AIR synthase family.

Its subcellular location is the cytoplasm. It carries out the reaction 2-formamido-N(1)-(5-O-phospho-beta-D-ribosyl)acetamidine + ATP = 5-amino-1-(5-phospho-beta-D-ribosyl)imidazole + ADP + phosphate + H(+). The protein operates within purine metabolism; IMP biosynthesis via de novo pathway; 5-amino-1-(5-phospho-D-ribosyl)imidazole from N(2)-formyl-N(1)-(5-phospho-D-ribosyl)glycinamide: step 2/2. The sequence is that of Phosphoribosylformylglycinamidine cyclo-ligase from Streptococcus pneumoniae (strain Taiwan19F-14).